A 69-amino-acid chain; its full sequence is Cytochrome c oxidase subunit 8A, mitochondrial (69 aa).

The transit peptide at 1-25 directs the protein to the mitochondrion; the sequence is MSVLTPLLLRGLTGSARRLPVLRAQ. The SIFI-degron motif lies at 2-19; sequence SVLTPLLLRGLTGSARRL. At 26–36 the chain is on the mitochondrial matrix side; sequence VHSKPPREKLG. Residues 37 to 60 form a helical membrane-spanning segment; sequence TMDVAIGLTSCFVCFLLPSGWVLS. Residues 61–69 are Mitochondrial intermembrane-facing; it reads HLETYKKRE.

The protein belongs to the cytochrome c oxidase VIII family. As to quaternary structure, component of the cytochrome c oxidase (complex IV, CIV), a multisubunit enzyme composed of 14 subunits. The complex is composed of a catalytic core of 3 subunits MT-CO1, MT-CO2 and MT-CO3, encoded in the mitochondrial DNA, and 11 supernumerary subunits COX4I, COX5A, COX5B, COX6A, COX6B, COX6C, COX7A, COX7B, COX7C, COX8 and NDUFA4, which are encoded in the nuclear genome. The complex exists as a monomer or a dimer and forms supercomplexes (SCs) in the inner mitochondrial membrane with NADH-ubiquinone oxidoreductase (complex I, CI) and ubiquinol-cytochrome c oxidoreductase (cytochrome b-c1 complex, complex III, CIII), resulting in different assemblies (supercomplex SCI(1)III(2)IV(1) and megacomplex MCI(2)III(2)IV(2)). In response to mitochondrial stress, the precursor protein is ubiquitinated by the SIFI complex in the cytoplasm before mitochondrial import, leading to its degradation. Within the SIFI complex, UBR4 initiates ubiquitin chain that are further elongated or branched by KCMF1.

The protein localises to the mitochondrion inner membrane. The protein operates within energy metabolism; oxidative phosphorylation. Its function is as follows. Component of the cytochrome c oxidase, the last enzyme in the mitochondrial electron transport chain which drives oxidative phosphorylation. The respiratory chain contains 3 multisubunit complexes succinate dehydrogenase (complex II, CII), ubiquinol-cytochrome c oxidoreductase (cytochrome b-c1 complex, complex III, CIII) and cytochrome c oxidase (complex IV, CIV), that cooperate to transfer electrons derived from NADH and succinate to molecular oxygen, creating an electrochemical gradient over the inner membrane that drives transmembrane transport and the ATP synthase. Cytochrome c oxidase is the component of the respiratory chain that catalyzes the reduction of oxygen to water. Electrons originating from reduced cytochrome c in the intermembrane space (IMS) are transferred via the dinuclear copper A center (CU(A)) of subunit 2 and heme A of subunit 1 to the active site in subunit 1, a binuclear center (BNC) formed by heme A3 and copper B (CU(B)). The BNC reduces molecular oxygen to 2 water molecules using 4 electrons from cytochrome c in the IMS and 4 protons from the mitochondrial matrix. The chain is Cytochrome c oxidase subunit 8A, mitochondrial (COX8A) from Eulemur fulvus fulvus (Brown lemur).